Reading from the N-terminus, the 279-residue chain is Monoacylglycerol lipase (279 aa).

The Nucleophile role is filled by serine 110. Active-site charge relay system residues include aspartate 226 and histidine 256.

It belongs to the AB hydrolase superfamily. Monomer.

It is found in the secreted. The protein resides in the cell wall. It catalyses the reaction a 1-acylglycerol + H2O = glycerol + a fatty acid + H(+). The catalysed reaction is Hydrolyzes glycerol monoesters of long-chain fatty acids.. It carries out the reaction 1-butyrylglycerol + H2O = butanoate + glycerol + H(+). The enzyme catalyses 1-octanoylglycerol + H2O = octanoate + glycerol + H(+). It catalyses the reaction 1-decanoylglycerol + H2O = decanoate + glycerol + H(+). The catalysed reaction is 1-dodecanoylglycerol + H2O = dodecanoate + glycerol + H(+). It carries out the reaction 1-tetradecanoylglycerol + H2O = tetradecanoate + glycerol + H(+). The enzyme catalyses 1-(9Z-octadecenoyl)-glycerol + H2O = glycerol + (9Z)-octadecenoate + H(+). It catalyses the reaction 2-(9Z-octadecenoyl)-glycerol + H2O = glycerol + (9Z)-octadecenoate + H(+). With respect to regulation, inhibited by the serine esterase inhibitors PMSF (100%), E600 (80%) and THL (22%). Virtual screening identified a tautomer of ZINC13451138, known inhibitor for HIV-1 integrase, as a potential inhibitor. Functionally, involved in the hydrolysis of exogenous host lipids during chronic infection. Catalyzes the hydrolysis of both monoacylglycerols (MAG) and diacylglycerols (DAG), with a preference for MAG. It hydrolyzes 2-MAG, 1-3-MAG and MAG with short, medium and long chain fatty acids such as 1-monobutyroyl-rac-glycerol (MC4), 1-mono-octanoyl-rac-glycerol (MC8), 1-monodecanoyl-rac-glycerol (MC10), 1-monolauroyl-rac-glycerol (MC12), 1-monomyristoyl-rac-glycerol (MC14) and 1-mono-oleyl-rac-glycerol (MC18:1). Also able to hydrolyze DAG with short (DiC6) and medium (DiC10) fatty acid chains, but not with longest fatty acid chains. Can also hydrolyze vinyl laurate (VC12), vinyl butyrate (VC4) and vinyl propionate (VC3). In terms of biological role, induces an inflammatory response and cell apoptosis in the host cells. Increases expression of IL-6, NF-kappaB, TLR-2, TLR-6, TNF-alpha, and MyD88 in mouse alveolar macrophage RAW264.7 cells. Persistent expression induces RAW264.7 cell apoptosis in vitro. The chain is Monoacylglycerol lipase from Mycobacterium tuberculosis (strain ATCC 25618 / H37Rv).